Here is a 269-residue protein sequence, read N- to C-terminus: Flagellar hook-basal body complex protein FlhP (269 aa).

Residues T7–T65 are a coiled coil.

It belongs to the flagella basal body rod proteins family.

The sequence is that of Flagellar hook-basal body complex protein FlhP (flhP) from Bacillus subtilis (strain 168).